We begin with the raw amino-acid sequence, 260 residues long: NH(3)-dependent NAD(+) synthetase (260 aa).

Residue 31–38 (GLSGGLDS) coordinates ATP. Position 37 (D37) interacts with Mg(2+). R112 lines the deamido-NAD(+) pocket. T132 contacts ATP. E137 provides a ligand contact to Mg(2+). ATP-binding residues include K161 and S183.

This sequence belongs to the NAD synthetase family. As to quaternary structure, homodimer.

The enzyme catalyses deamido-NAD(+) + NH4(+) + ATP = AMP + diphosphate + NAD(+) + H(+). The protein operates within cofactor biosynthesis; NAD(+) biosynthesis; NAD(+) from deamido-NAD(+) (ammonia route): step 1/1. Functionally, catalyzes the ATP-dependent amidation of deamido-NAD to form NAD. Uses ammonia as a nitrogen source. In Helicobacter pylori (strain ATCC 700392 / 26695) (Campylobacter pylori), this protein is NH(3)-dependent NAD(+) synthetase.